Consider the following 445-residue polypeptide: MVRNLEDFCNEANAKHIRIEDRERYTGHFNALKDMVYSYWKKSKGLDKLVKGTTLCGGYGDNLKVSKPDEYDLLIHLVFPENDKIIVKADASNPGNVLLDMTKVMEIIAKQEHNKPVFDLLQKIVNNKKQLLEDKLQSFLHGIMTQTLNKMGNRIEVQGEISHLSYKKCGPAHNILVKGPCEYSVDFVPAIKLSAAQLVLAPEQRKHFGGTLYWDAVPKPMKPAKPDNPSFRTSFYEAERSLLHGKQNLKSAIRMIKHIRNEKNKANLKSYHIKTVFLWQVMEKDASYWEKPKKEILIEMLGKLADLLALTPRKGRLPYFWDPKLDMFADLTDDQRTDMFNCFRKCEYVFRKADGNLNDDNENSVHSSFKGSGRNGQKMEKTSTESEQKKPTETKPNAKVESTPVKPNPKPSVQEKQAKPNLADQKKCTKNANGTKSKTTTPKPS.

Residues E70, D72, and D186 each coordinate Mg(2+). Residue 70–72 (EYD) participates in ATP binding. Residues D186 and 232–239 (RTSFYEAE) contribute to the GTP site. ATP contacts are provided by residues 236–239 (YEAE), K257, and 270–274 (SYHIK). The segment at 357 to 445 (LNDDNENSVH…KSKTTTPKPS (89 aa)) is disordered. Residues 377–398 (QKMEKTSTESEQKKPTETKPNA) are compositionally biased toward basic and acidic residues. The segment covering 435-445 (TKSKTTTPKPS) has biased composition (low complexity).

This sequence belongs to the mab-21 family. The cofactor is Mg(2+). It depends on Mn(2+) as a cofactor.

It catalyses the reaction GTP + ATP = 3',2'-cGAMP + 2 diphosphate. The enzyme catalyses GTP + ATP = pppA(2'-5')pG + diphosphate. It carries out the reaction pppA(2'-5')pG = 3',2'-cGAMP + diphosphate. Its activity is regulated as follows. The enzyme activity is specifically activated by double-stranded RNA (dsRNA). Nucleotidyltransferase that catalyzes the formation of cyclic GMP-AMP (3',2'-cGAMP) from ATP and GTP and plays a key role in innate immunity. Synthesizes 3',2'-cGAMP in a two-step reaction through production of the linear intermediate pppA(2'-5')pG. Acts as a key sensor of double-stranded RNA (dsRNA), the presence of dsRNA in the cytoplasm being a danger signal that triggers the immune responses. Directly binds dsRNA, activating the nucleotidyltransferase activity, leading to synthesis of 3',2'-cGAMP, a second messenger that binds to and activates Sting, thereby triggering the antiviral immune response via activation of the NF-kappa-B transcription factor Rel (Relish). The protein is Cyclic GMP-AMP synthase-like receptor 1 of Drosophila erecta (Fruit fly).